The sequence spans 264 residues: Apolipoprotein A-I (264 aa).

The N-terminal stretch at 1–18 (MKAVVLAVAVLFLTGSQA) is a signal peptide. A run of 2 repeats spans residues 67 to 88 (LNLL…EQLG) and 89 to 110 (HVSQ…EEMN). Residues 67–264 (LNLLENWDTL…DQITKHVTTQ (198 aa)) are 10 X approximate tandem repeats. Methionine sulfoxide is present on Met109. The stretch at 111–121 (KDLEKVKKKVQ) is one 3; half-length repeat. Repeat copies occupy residues 122-143 (PFLD…HKVE), 144-165 (PLSL…EKLG), and 166-187 (PLGK…SHLR). The stretch at 188–207 (TYTEEMGQILAERLGAIKES) is one 7; truncated repeat. Position 193 is a methionine sulfoxide (Met193). Residues 208 to 229 (TSLAEYQTKASEHLRTFSKKAK) form repeat 8. The 9; half-length repeat unit spans residues 230 to 240 (PILEDLRQGLL). Repeat 10 spans residues 241-264 (PVAENFKTNIKNTFDQITKHVTTQ).

The protein belongs to the apolipoprotein A1/A4/E family. As to quaternary structure, homodimer. Interacts with APOA1BP and CLU. Component of a sperm activating protein complex (SPAP), consisting of APOA1, an immunoglobulin heavy chain, an immunoglobulin light chain and albumin. Interacts with NDRG1. Interacts with SCGB3A2. Interacts with NAXE and YJEFN3. Post-translationally, glycosylated. Palmitoylated. In terms of processing, phosphorylation sites are present in the extracellular medium.

Its subcellular location is the secreted. Participates in the reverse transport of cholesterol from tissues to the liver for excretion by promoting cholesterol efflux from tissues and by acting as a cofactor for the lecithin cholesterol acyltransferase (LCAT). As part of the SPAP complex, activates spermatozoa motility. The chain is Apolipoprotein A-I (Apoa1) from Fukomys damarensis (Damaraland mole rat).